The following is a 285-amino-acid chain: Acetyl-coenzyme A carboxylase carboxyl transferase subunit beta 2 (285 aa).

The disordered stretch occupies residues Met-1–Lys-20. The region spanning Leu-26 to Val-285 is the CoA carboxyltransferase N-terminal domain. Zn(2+) is bound by residues Cys-30, Cys-33, Cys-49, and Cys-52. The C4-type zinc finger occupies Cys-30–Cys-52.

The protein belongs to the AccD/PCCB family. Acetyl-CoA carboxylase is a heterohexamer composed of biotin carboxyl carrier protein (AccB), biotin carboxylase (AccC) and two subunits each of ACCase subunit alpha (AccA) and ACCase subunit beta (AccD). Requires Zn(2+) as cofactor.

Its subcellular location is the cytoplasm. The catalysed reaction is N(6)-carboxybiotinyl-L-lysyl-[protein] + acetyl-CoA = N(6)-biotinyl-L-lysyl-[protein] + malonyl-CoA. The protein operates within lipid metabolism; malonyl-CoA biosynthesis; malonyl-CoA from acetyl-CoA: step 1/1. In terms of biological role, component of the acetyl coenzyme A carboxylase (ACC) complex. Biotin carboxylase (BC) catalyzes the carboxylation of biotin on its carrier protein (BCCP) and then the CO(2) group is transferred by the transcarboxylase to acetyl-CoA to form malonyl-CoA. This chain is Acetyl-coenzyme A carboxylase carboxyl transferase subunit beta 2, found in Lysinibacillus sphaericus (strain C3-41).